The following is a 282-amino-acid chain: ATP phosphoribosyltransferase (282 aa).

It belongs to the ATP phosphoribosyltransferase family. Long subfamily. Mg(2+) is required as a cofactor.

It is found in the cytoplasm. The catalysed reaction is 1-(5-phospho-beta-D-ribosyl)-ATP + diphosphate = 5-phospho-alpha-D-ribose 1-diphosphate + ATP. It functions in the pathway amino-acid biosynthesis; L-histidine biosynthesis; L-histidine from 5-phospho-alpha-D-ribose 1-diphosphate: step 1/9. Feedback inhibited by histidine. Its function is as follows. Catalyzes the condensation of ATP and 5-phosphoribose 1-diphosphate to form N'-(5'-phosphoribosyl)-ATP (PR-ATP). Has a crucial role in the pathway because the rate of histidine biosynthesis seems to be controlled primarily by regulation of HisG enzymatic activity. The chain is ATP phosphoribosyltransferase from Pyrobaculum aerophilum (strain ATCC 51768 / DSM 7523 / JCM 9630 / CIP 104966 / NBRC 100827 / IM2).